The chain runs to 150 residues: MRCVVYSIAKSSPLELVKIYQKQCKRFDCELELVDLFPKNTANAQKVSKELAQKSYSLAFEPYLNLKAKNIALHPKAQRGDSFAFSKMLENHLNINFFIAGAYGFEENFLKDCQAWSLSEMTFSHEVAKIVLCEQIYRALSIIFKHPYHK.

Residues Ala100 and 118–123 each bind S-adenosyl-L-methionine; that span reads LSEMTF.

It belongs to the RNA methyltransferase RlmH family. In terms of assembly, homodimer.

It localises to the cytoplasm. It catalyses the reaction pseudouridine(1915) in 23S rRNA + S-adenosyl-L-methionine = N(3)-methylpseudouridine(1915) in 23S rRNA + S-adenosyl-L-homocysteine + H(+). Specifically methylates the pseudouridine at position 1915 (m3Psi1915) in 23S rRNA. This Helicobacter pylori (strain P12) protein is Ribosomal RNA large subunit methyltransferase H.